Consider the following 122-residue polypeptide: Putative protein adenylyltransferase MJ1547 (122 aa).

The short motif at 11–25 (GSYAKNEYTKRSDID) is the GSX(10)DXD motif element. 3 residues coordinate Mg(2+): Asp23, Asp25, and Asp48.

This sequence belongs to the MntA antitoxin family. Probably forms a complex with cognate toxin MJ1548. The cofactor is Mg(2+).

It carries out the reaction L-tyrosyl-[protein] + ATP = O-(5'-adenylyl)-L-tyrosyl-[protein] + diphosphate. It catalyses the reaction O-(5'-adenylyl)-L-tyrosyl-[protein] + ATP = O-[5'-(adenylyl-(5'-&gt;3')-adenylyl)]-L-tyrosyl-[protein] + diphosphate. Probable antitoxin component of a putative type VII toxin-antitoxin (TA) system. Neutralizes cognate toxic MJ1548 by di-AMPylation. This Methanocaldococcus jannaschii (strain ATCC 43067 / DSM 2661 / JAL-1 / JCM 10045 / NBRC 100440) (Methanococcus jannaschii) protein is Putative protein adenylyltransferase MJ1547.